A 282-amino-acid polypeptide reads, in one-letter code: NADPH-dependent 7-cyano-7-deazaguanine reductase (282 aa).

Position 88 to 90 (88 to 90 (IES)) interacts with substrate. NADPH is bound at residue 90 to 91 (SK). C190 functions as the Thioimide intermediate in the catalytic mechanism. The active-site Proton donor is D197. A substrate-binding site is contributed by 229–230 (HE). 258–259 (RG) serves as a coordination point for NADPH.

The protein belongs to the GTP cyclohydrolase I family. QueF type 2 subfamily. Homodimer.

The protein localises to the cytoplasm. The catalysed reaction is 7-aminomethyl-7-carbaguanine + 2 NADP(+) = 7-cyano-7-deazaguanine + 2 NADPH + 3 H(+). It functions in the pathway tRNA modification; tRNA-queuosine biosynthesis. Catalyzes the NADPH-dependent reduction of 7-cyano-7-deazaguanine (preQ0) to 7-aminomethyl-7-deazaguanine (preQ1). The polypeptide is NADPH-dependent 7-cyano-7-deazaguanine reductase (Salmonella arizonae (strain ATCC BAA-731 / CDC346-86 / RSK2980)).